Reading from the N-terminus, the 313-residue chain is Acetaldehyde dehydrogenase (313 aa).

12–15 (SGNI) is an NAD(+) binding site. Catalysis depends on Cys-132, which acts as the Acyl-thioester intermediate. Residues 163–171 (SAGPGTRAN) and Asn-291 contribute to the NAD(+) site.

The protein belongs to the acetaldehyde dehydrogenase family.

It catalyses the reaction acetaldehyde + NAD(+) + CoA = acetyl-CoA + NADH + H(+). The sequence is that of Acetaldehyde dehydrogenase (bphG) from Burkholderia cepacia (Pseudomonas cepacia).